We begin with the raw amino-acid sequence, 2959 residues long: uncharacterized protein (2959 aa).

The protein localises to the virion. This is an uncharacterized protein from Acanthamoeba polyphaga mimivirus (APMV).